The chain runs to 169 residues: MTGITLVQGDITRQSADAIVNAANSSLLGGGGVDGAIHRRGGPAILAECRRLRAGHLGKGLPTGRAVATTAGDLDARWVIHTVGPVWSATEDRSGLLASCYRESLRTADELGARTVAFPAISTGVYRWPMDDAARIAVETVATTKTSVTEIRFVLFDARAYEAFAARLG.

Residues 1–169 enclose the Macro domain; sequence MTGITLVQGD…AYEAFAARLG (169 aa).

Belongs to the MacroD-type family.

This is Macro domain-containing protein SCO6450 from Streptomyces coelicolor (strain ATCC BAA-471 / A3(2) / M145).